Reading from the N-terminus, the 777-residue chain is Biotin sulfoxide reductase (777 aa).

Ser-148 is a binding site for Mo-bis(molybdopterin guanine dinucleotide).

It belongs to the prokaryotic molybdopterin-containing oxidoreductase family. Requires Mo-bis(molybdopterin guanine dinucleotide) as cofactor.

It carries out the reaction [thioredoxin]-disulfide + L-methionine + H2O = L-methionine (S)-S-oxide + [thioredoxin]-dithiol. Functionally, this enzyme may serve as a scavenger, allowing the cell to utilize biotin sulfoxide as a biotin source. It reduces a spontaneous oxidation product of biotin, D-biotin D-sulfoxide (BSO or BDS), back to biotin. Also exhibits methionine-(S)-sulfoxide (Met-S-SO) reductase activity, acting specifically on the (S) enantiomer in the free, but not the protein-bound form. It thus plays a role in assimilation of oxidized methionines. The protein is Biotin sulfoxide reductase (bisC) of Escherichia coli (strain K12).